The sequence spans 169 residues: Short form salivary protein D7R3 (169 aa).

An N-terminal signal peptide occupies residues 1–21 (MFGKLLPCAILVWCLFSLGQA). 3 disulfides stabilise this stretch: cysteine 30/cysteine 62, cysteine 43/cysteine 168, and cysteine 101/cysteine 120. Positions 31 and 46 each coordinate noradrenaline. Glutamate 31 lines the serotonin pocket. Serotonin is bound by residues histidine 59, tyrosine 118, aspartate 135, and glutamate 138. Residues tyrosine 118, aspartate 135, and glutamate 138 each coordinate histamine. Noradrenaline is bound by residues aspartate 135 and glutamate 138.

It belongs to the PBP/GOBP family. As to expression, female saliva (at protein level). Female salivary gland. Low-level expression in female carcass without salivary glands. Not detected in male tissues.

Its subcellular location is the secreted. Its function is as follows. Modulates blood feeding of female mosquitoes on vertebrate species by binding and sequestering different mediators involved in the host response. Binds serotonin, noradrenaline, histamine and adrenaline. Inhibits histamine-, serotonin- and noradrenaline-induced smooth muscle contraction. Exhibits vasodilating activity. The protein is Short form salivary protein D7R3 of Anopheles gambiae (African malaria mosquito).